The chain runs to 205 residues: Small ribosomal subunit protein uS7 (205 aa).

This sequence belongs to the universal ribosomal protein uS7 family. In terms of assembly, part of the 30S ribosomal subunit.

In terms of biological role, one of the primary rRNA binding proteins, it binds directly to 16S rRNA where it nucleates assembly of the head domain of the 30S subunit. Is located at the subunit interface close to the decoding center. The chain is Small ribosomal subunit protein uS7 from Aeropyrum pernix (strain ATCC 700893 / DSM 11879 / JCM 9820 / NBRC 100138 / K1).